The chain runs to 419 residues: eIF5-mimic protein 1 (419 aa).

The disordered stretch occupies residues 1-22 (MNKHQKPVLTGQRFKTRKRDEK). An N6-acetyllysine modification is found at K117. Residues 248–415 (VQQSLGTRKE…QNAEEESESE (168 aa)) enclose the W2 domain. A phosphoserine mark is found at S412 and S414.

It belongs to the BZW family. As to quaternary structure, interacts with EIF3E. Interacts with EIF2S2. Interacts with EIF3C.

The protein localises to the cytoplasm. Translation initiation regulator which represses non-AUG initiated translation and repeat-associated non-AUG (RAN) initiated translation by acting as a competitive inhibitor of eukaryotic translation initiation factor 5 (EIF5) function. Increases the accuracy of translation initiation by impeding EIF5-dependent translation from non-AUG codons by competing with it for interaction with EIF2S2 within the 43S pre-initiation complex (PIC) in an EIF3C-binding dependent manner. The sequence is that of eIF5-mimic protein 1 (BZW2) from Homo sapiens (Human).